The sequence spans 439 residues: Choline monooxygenase, chloroplastic (439 aa).

A chloroplast-targeting transit peptide spans M1–N60. The span at N24–P41 shows a compositional bias: low complexity. Residues N24–P54 are disordered. Residues Q42–P54 show a composition bias toward polar residues. Residues W120–I227 form the Rieske domain. [2Fe-2S] cluster-binding residues include C162, H164, C181, and H184. 2 residues coordinate Fe cation: H287 and H292.

In terms of assembly, homotrimer or homodimer. The cofactor is [2Fe-2S] cluster. Requires Fe cation as cofactor. Mg(2+) serves as cofactor. Expressed in leaves.

Its subcellular location is the plastid. The protein resides in the chloroplast stroma. It catalyses the reaction choline + 2 reduced [2Fe-2S]-[ferredoxin] + O2 + 2 H(+) = betaine aldehyde hydrate + 2 oxidized [2Fe-2S]-[ferredoxin] + H2O. It participates in amine and polyamine biosynthesis; betaine biosynthesis via choline pathway; betaine aldehyde from choline (monooxygenase route): step 1/1. Catalyzes the first step of the osmoprotectant glycine betaine synthesis. The sequence is that of Choline monooxygenase, chloroplastic (CMO) from Spinacia oleracea (Spinach).